The chain runs to 207 residues: uncharacterized protein (207 aa).

The protein belongs to the methyltransferase superfamily.

This is an uncharacterized protein from Escherichia coli (strain K12).